The chain runs to 151 residues: NAD(P)H-quinone oxidoreductase subunit N (151 aa).

The protein belongs to the complex I NdhN subunit family. In terms of assembly, NDH-1 can be composed of about 15 different subunits; different subcomplexes with different compositions have been identified which probably have different functions.

The protein resides in the cellular thylakoid membrane. The enzyme catalyses a plastoquinone + NADH + (n+1) H(+)(in) = a plastoquinol + NAD(+) + n H(+)(out). It catalyses the reaction a plastoquinone + NADPH + (n+1) H(+)(in) = a plastoquinol + NADP(+) + n H(+)(out). Its function is as follows. NDH-1 shuttles electrons from an unknown electron donor, via FMN and iron-sulfur (Fe-S) centers, to quinones in the respiratory and/or the photosynthetic chain. The immediate electron acceptor for the enzyme in this species is believed to be plastoquinone. Couples the redox reaction to proton translocation, and thus conserves the redox energy in a proton gradient. Cyanobacterial NDH-1 also plays a role in inorganic carbon-concentration. This is NAD(P)H-quinone oxidoreductase subunit N from Acaryochloris marina (strain MBIC 11017).